The chain runs to 262 residues: Ribosome-recycling factor, mitochondrial (262 aa).

A mitochondrion-targeting transit peptide spans 1–55; the sequence is MALGLKCFRMVHPTFRNYLAASIRPVSEVTLKTVHERQHGHRQYMAYSAVPVRHF.

The protein belongs to the RRF family.

It localises to the mitochondrion. Its function is as follows. Responsible for the disassembly of ribosomes from messenger RNA at the termination of mitochondrial protein biosynthesis. Acts in collaboration with GFM2. Promotes mitochondrial ribosome recycling by dissolution of intersubunit contacts. In Homo sapiens (Human), this protein is Ribosome-recycling factor, mitochondrial.